The sequence spans 504 residues: D-alanine--D-alanyl carrier protein ligase (504 aa).

An ATP-binding site is contributed by 152–153 (TS). D197 is a binding site for D-alanine. 292 to 297 (NTYGPT) is a binding site for ATP. V301 provides a ligand contact to D-alanine. ATP is bound by residues D383, 394-397 (YNGR), and K492. K492 provides a ligand contact to D-alanine.

The protein belongs to the ATP-dependent AMP-binding enzyme family. DltA subfamily.

It localises to the cytoplasm. It carries out the reaction holo-[D-alanyl-carrier protein] + D-alanine + ATP = D-alanyl-[D-alanyl-carrier protein] + AMP + diphosphate. It functions in the pathway cell wall biogenesis; lipoteichoic acid biosynthesis. Catalyzes the first step in the D-alanylation of lipoteichoic acid (LTA), the activation of D-alanine and its transfer onto the D-alanyl carrier protein (Dcp) DltC. In an ATP-dependent two-step reaction, forms a high energy D-alanyl-AMP intermediate, followed by transfer of the D-alanyl residue as a thiol ester to the phosphopantheinyl prosthetic group of the Dcp. D-alanylation of LTA plays an important role in modulating the properties of the cell wall in Gram-positive bacteria, influencing the net charge of the cell wall. This is D-alanine--D-alanyl carrier protein ligase from Bacillus cereus (strain AH187).